The following is a 250-amino-acid chain: MSNDPTHQFQIHKIVPIEIGGIDFSFTNASLFMVATVACAAGFLYFATSNRGLIPGRAQSVAEMSYEFVASMLREGAGSHGMKFFPMVFSLFMFVLTANLLGMMPYFFTITSQIVVTFALAIFVIGTVLVYGFYKHGLGFLNLFVPSGVPGALLLLVVPIEVISFLSRPISLSIRLFANMLAGHITLKVFAGFVASLGSLGALGVGGALLPLAMTVALTGLEFLVAFLQAYVFAVLTCMYLNDAIHPGGH.

6 helical membrane passes run 29–49 (ASLF…FATS), 84–104 (FFPM…LGMM), 114–134 (IVVT…YGFY), 143–163 (LFVP…IEVI), 189–209 (VFAG…GGAL), and 216–236 (VALT…FAVL).

Belongs to the ATPase A chain family. F-type ATPases have 2 components, CF(1) - the catalytic core - and CF(0) - the membrane proton channel. CF(1) has five subunits: alpha(3), beta(3), gamma(1), delta(1), epsilon(1). CF(0) has three main subunits: a(1), b(2) and c(9-12). The alpha and beta chains form an alternating ring which encloses part of the gamma chain. CF(1) is attached to CF(0) by a central stalk formed by the gamma and epsilon chains, while a peripheral stalk is formed by the delta and b chains.

Its subcellular location is the cell inner membrane. Functionally, key component of the proton channel; it plays a direct role in the translocation of protons across the membrane. The protein is ATP synthase subunit a of Allorhizobium ampelinum (strain ATCC BAA-846 / DSM 112012 / S4) (Agrobacterium vitis (strain S4)).